We begin with the raw amino-acid sequence, 380 residues long: Tryptophan 2,3-dioxygenase (380 aa).

Substrate contacts are provided by residues 57–61 (FIITH) and arginine 128. Histidine 313 is a heme binding site. Threonine 328 contacts substrate.

This sequence belongs to the tryptophan 2,3-dioxygenase family. Homotetramer. Dimer of dimers. Heme is required as a cofactor.

It carries out the reaction L-tryptophan + O2 = N-formyl-L-kynurenine. The protein operates within amino-acid degradation; L-tryptophan degradation via kynurenine pathway; L-kynurenine from L-tryptophan: step 1/2. It functions in the pathway pigment biosynthesis; ommochrome biosynthesis. Functionally, heme-dependent dioxygenase that catalyzes the oxidative cleavage of the L-tryptophan (L-Trp) pyrrole ring and converts L-tryptophan to N-formyl-L-kynurenine. Catalyzes the oxidative cleavage of the indole moiety. The chain is Tryptophan 2,3-dioxygenase from Drosophila persimilis (Fruit fly).